The sequence spans 879 residues: Phosphoenolpyruvate carboxylase (879 aa).

Residues His-138 and Lys-545 contribute to the active site.

Belongs to the PEPCase type 1 family. Mg(2+) is required as a cofactor.

It carries out the reaction oxaloacetate + phosphate = phosphoenolpyruvate + hydrogencarbonate. Its function is as follows. Forms oxaloacetate, a four-carbon dicarboxylic acid source for the tricarboxylic acid cycle. This is Phosphoenolpyruvate carboxylase (ppc) from Haemophilus influenzae (strain ATCC 51907 / DSM 11121 / KW20 / Rd).